Reading from the N-terminus, the 353-residue chain is ATPase GET3 (353 aa).

Residue 26 to 33 (KGGVGKTT) participates in ATP binding. Residue Asp-57 is part of the active site. 2 residues coordinate ATP: Glu-244 and Asn-271. Zn(2+) is bound by residues Cys-284 and Cys-287.

This sequence belongs to the arsA ATPase family. Homodimer. Component of the Golgi to ER traffic (GET) complex, which is composed of GET1, GET2 and GET3. Within the complex, GET1 and GET2 form a heterotetramer which is stabilized by phosphatidylinositol binding and which binds to the GET3 homodimer. Interacts with the chloride channel protein GEF1.

It localises to the cytoplasm. Its subcellular location is the endoplasmic reticulum. It is found in the golgi apparatus. ATPase required for the post-translational delivery of tail-anchored (TA) proteins to the endoplasmic reticulum. Recognizes and selectively binds the transmembrane domain of TA proteins in the cytosol. This complex then targets to the endoplasmic reticulum by membrane-bound receptors GET1 and GET2, where the tail-anchored protein is released for insertion. This process is regulated by ATP binding and hydrolysis. ATP binding drives the homodimer towards the closed dimer state, facilitating recognition of newly synthesized TA membrane proteins. ATP hydrolysis is required for insertion. Subsequently, the homodimer reverts towards the open dimer state, lowering its affinity for the GET1-GET2 receptor, and returning it to the cytosol to initiate a new round of targeting. Cooperates with the HDEL receptor ERD2 to mediate the ATP-dependent retrieval of resident ER proteins that contain a C-terminal H-D-E-L retention signal from the Golgi to the ER. Involved in low-level resistance to the oxyanions arsenite and arsenate, and in heat tolerance. This is ATPase GET3 from Zygosaccharomyces rouxii (strain ATCC 2623 / CBS 732 / NBRC 1130 / NCYC 568 / NRRL Y-229).